Reading from the N-terminus, the 198-residue chain is Recombination protein RecR (198 aa).

The segment at 56 to 71 (CDTCGNVDTQNPCGIC) adopts a C4-type zinc-finger fold. A Toprim domain is found at 79–174 (KSICVVEDVA…RITQLAHGLP (96 aa)).

Belongs to the RecR family.

Functionally, may play a role in DNA repair. It seems to be involved in an RecBC-independent recombinational process of DNA repair. It may act with RecF and RecO. This Erythrobacter litoralis (strain HTCC2594) protein is Recombination protein RecR.